Reading from the N-terminus, the 370-residue chain is Glycerophosphodiester phosphodiesterase GDPD3 (370 aa).

The 288-residue stretch at 35–322 folds into the GP-PDE domain; sequence FVLMGHRGFG…DMVKDISEAI (288 aa).

The protein belongs to the glycerophosphoryl diester phosphodiesterase family. In terms of tissue distribution, expressed in flowers and siliques.

The enzyme catalyses a sn-glycero-3-phosphodiester + H2O = an alcohol + sn-glycerol 3-phosphate + H(+). This Arabidopsis thaliana (Mouse-ear cress) protein is Glycerophosphodiester phosphodiesterase GDPD3.